Consider the following 41-residue polypeptide: Large ribosomal subunit protein bL36 (41 aa).

This sequence belongs to the bacterial ribosomal protein bL36 family.

This is Large ribosomal subunit protein bL36 from Bradyrhizobium diazoefficiens (strain JCM 10833 / BCRC 13528 / IAM 13628 / NBRC 14792 / USDA 110).